Reading from the N-terminus, the 267-residue chain is Protein HesA, heterocyst (267 aa).

This sequence belongs to the HesA/MoeB/ThiF family.

This chain is Protein HesA, heterocyst (hesA1), found in Trichormus variabilis (strain ATCC 29413 / PCC 7937) (Anabaena variabilis).